Here is a 187-residue protein sequence, read N- to C-terminus: Casparian strip membrane protein 5 (187 aa).

The Cytoplasmic portion of the chain corresponds to 1 to 24; that stretch reads MKSGQAEIVETSKGIQKSGLMSRR. Residues 25–45 form a helical membrane-spanning segment; the sequence is IAILEFILRIVAFFNTIGSAI. Residues 46 to 74 are Extracellular-facing; sequence LMGTTHETLPFFTQFIRFQAEYNDLPALT. Residues 75 to 95 traverse the membrane as a helical segment; it reads FFVVANAVVSGYLIMSLTLAF. Residues 96 to 107 are Cytoplasmic-facing; it reads VHIVKRKTQNTR. Residues 108-128 traverse the membrane as a helical segment; the sequence is ILLIVLDVAMLGLLSAGASSA. At 129 to 161 the chain is on the extracellular side; the sequence is AAIVYLAHNGNNKTNWFAICQQFNSFCERISGS. N-linked (GlcNAc...) asparagine glycosylation is present at Asn140. The chain crosses the membrane as a helical span at residues 162–182; that stretch reads LIGSFIAVVLLILLILLSAIA. The Cytoplasmic portion of the chain corresponds to 183-187; it reads LSRRH.

It belongs to the Casparian strip membrane proteins (CASP) family. As to quaternary structure, homodimer and heterodimers.

It localises to the cell membrane. Regulates membrane-cell wall junctions and localized cell wall deposition. Required for establishment of the Casparian strip membrane domain (CSD) and the subsequent formation of Casparian strips, a cell wall modification of the root endodermis that determines an apoplastic barrier between the intraorganismal apoplasm and the extraorganismal apoplasm and prevents lateral diffusion. This is Casparian strip membrane protein 5 from Arabidopsis lyrata subsp. lyrata (Lyre-leaved rock-cress).